We begin with the raw amino-acid sequence, 202 residues long: UPF0316 protein SH1041 (202 aa).

3 helical membrane-spanning segments follow: residues 8–28, 40–60, and 66–86; these read PWSM…FLTM, MAAA…GMVM, and IQNI…GMKI.

It belongs to the UPF0316 family.

It localises to the cell membrane. This Staphylococcus haemolyticus (strain JCSC1435) protein is UPF0316 protein SH1041.